A 439-amino-acid chain; its full sequence is Perilipin-3 (439 aa).

Low complexity predominate over residues 1–19; sequence MFASETEASASSTQVTTEE. A disordered region spans residues 1-26; that stretch reads MFASETEASASSTQVTTEEPVQQPSV. K66 is modified (N6-acetyllysine). S92 is subject to Phosphoserine. Residue K123 forms a Glycyl lysine isopeptide (Lys-Gly) (interchain with G-Cter in SUMO1) linkage. S131 bears the Phosphoserine mark. At T175 the chain carries Phosphothreonine. 2 positions are modified to phosphoserine: S180 and S184. Phosphothreonine is present on T221. Residues S222 and S246 each carry the phosphoserine modification. Coiled coils occupy residues 254-282 and 358-381; these read RAYE…QALS and AHVK…FSGM. Y256 is subject to Phosphotyrosine.

The protein belongs to the perilipin family. As to quaternary structure, homooligomer. Interacts with M6PR (via the cytoplasmic domain). Interacts with IGF2R (via the cytoplasmic domain). In terms of processing, phosphorylation at Tyr-256 by isoform 1 of CHKA (CHKalpha2) promotes dissociation from lipid droplets: dissociation is followed by recruitment of autophagosome machinery to lipid droplets and subsequent lipid droplet lipolysis.

It localises to the lipid droplet. Its subcellular location is the endosome membrane. The protein localises to the cytoplasm. Functionally, structural component of lipid droplets, which is required for the formation and maintenance of lipid storage droplets. Required for the transport of mannose 6-phosphate receptors (MPR) from endosomes to the trans-Golgi network. The chain is Perilipin-3 (PLIN3) from Sus scrofa (Pig).